We begin with the raw amino-acid sequence, 629 residues long: tRNA uridine 5-carboxymethylaminomethyl modification enzyme MnmG (629 aa).

FAD is bound by residues 13–18 (GGGHAG), valine 125, and serine 180. An NAD(+)-binding site is contributed by 273-287 (GPRYCPSIEDKVMRF). Glutamine 370 provides a ligand contact to FAD.

The protein belongs to the MnmG family. As to quaternary structure, homodimer. Heterotetramer of two MnmE and two MnmG subunits. Requires FAD as cofactor.

The protein resides in the cytoplasm. NAD-binding protein involved in the addition of a carboxymethylaminomethyl (cmnm) group at the wobble position (U34) of certain tRNAs, forming tRNA-cmnm(5)s(2)U34. In Klebsiella pneumoniae subsp. pneumoniae (strain ATCC 700721 / MGH 78578), this protein is tRNA uridine 5-carboxymethylaminomethyl modification enzyme MnmG.